Reading from the N-terminus, the 171-residue chain is Translation initiation factor IF-3 (171 aa).

This sequence belongs to the IF-3 family. As to quaternary structure, monomer.

It is found in the cytoplasm. Its function is as follows. IF-3 binds to the 30S ribosomal subunit and shifts the equilibrium between 70S ribosomes and their 50S and 30S subunits in favor of the free subunits, thus enhancing the availability of 30S subunits on which protein synthesis initiation begins. In Thermus thermophilus (strain ATCC BAA-163 / DSM 7039 / HB27), this protein is Translation initiation factor IF-3.